The sequence spans 289 residues: Glycine--tRNA ligase alpha subunit (289 aa).

The protein belongs to the class-II aminoacyl-tRNA synthetase family. Tetramer of two alpha and two beta subunits.

It is found in the cytoplasm. The catalysed reaction is tRNA(Gly) + glycine + ATP = glycyl-tRNA(Gly) + AMP + diphosphate. The sequence is that of Glycine--tRNA ligase alpha subunit from Prochlorococcus marinus (strain MIT 9515).